Consider the following 257-residue polypeptide: Caspase-14 (257 aa).

Residues His93 and Cys136 contribute to the active site. The propeptide occupies Asp156–Leu167.

Belongs to the peptidase C14A family. As to quaternary structure, heterodimer of a large and a small subunit, both processed from the precursor; the mature active form is a p17/p10 dimer and the intermediate form a p20/p8 dimer. In terms of processing, maturation by proteolytic processing appears to be a two-step process. The precursor is processed by KLK7 to yield the p20/p8 intermediate form which acts the precursor to yield the p17/p10 mature form. Initially it was reported that cleavage by granzyme B, caspase-8 and -10 generates the two active subunits, however the physiological relevance has not been established. As to expression, embryo, adult liver and less in adult brain and kidney. Expressed in differentiating keratinocytes of embryonic skin (at protein level). Expressed in keratinocytes of adult skin suprabasal layers (at protein level).

The protein localises to the cytoplasm. The protein resides in the nucleus. Non-apoptotic caspase which is involved in epidermal differentiation. Seems to play a role in keratinocyte differentiation and is required for cornification. Regulates maturation of the epidermis by proteolytically processing filaggrin. In vitro is equally active on the synthetic caspase substrates WEHD-ACF and IETD-AFC. Involved in processing of prosaposin in the epidermis. May be involved in retinal pigment epithelium cell barrier function. The chain is Caspase-14 (Casp14) from Mus musculus (Mouse).